The chain runs to 115 residues: Nucleoid-associated protein Ava_2322 (115 aa).

The protein belongs to the YbaB/EbfC family. Homodimer.

It is found in the cytoplasm. It localises to the nucleoid. Functionally, binds to DNA and alters its conformation. May be involved in regulation of gene expression, nucleoid organization and DNA protection. This is Nucleoid-associated protein Ava_2322 from Trichormus variabilis (strain ATCC 29413 / PCC 7937) (Anabaena variabilis).